The sequence spans 104 residues: L-rhamnose mutarotase (104 aa).

Tyrosine 18 contributes to the substrate binding site. Residue histidine 22 is the Proton donor of the active site. Residues tyrosine 41 and 76–77 (WW) contribute to the substrate site.

It belongs to the rhamnose mutarotase family. As to quaternary structure, homodimer.

Its subcellular location is the cytoplasm. The enzyme catalyses alpha-L-rhamnose = beta-L-rhamnose. It participates in carbohydrate metabolism; L-rhamnose metabolism. In terms of biological role, involved in the anomeric conversion of L-rhamnose. In Salmonella newport (strain SL254), this protein is L-rhamnose mutarotase.